The sequence spans 367 residues: 3-dehydroquinate synthase (367 aa).

Residues 112 to 116, 136 to 137, Lys149, Lys158, and 176 to 179 contribute to the NAD(+) site; these read GVIGD, TT, and TLKT. Zn(2+) is bound by residues Glu191, His256, and His273.

This sequence belongs to the sugar phosphate cyclases superfamily. Dehydroquinate synthase family. The cofactor is NAD(+). Requires Co(2+) as cofactor. Zn(2+) is required as a cofactor.

It is found in the cytoplasm. The enzyme catalyses 7-phospho-2-dehydro-3-deoxy-D-arabino-heptonate = 3-dehydroquinate + phosphate. Its pathway is metabolic intermediate biosynthesis; chorismate biosynthesis; chorismate from D-erythrose 4-phosphate and phosphoenolpyruvate: step 2/7. In terms of biological role, catalyzes the conversion of 3-deoxy-D-arabino-heptulosonate 7-phosphate (DAHP) to dehydroquinate (DHQ). This chain is 3-dehydroquinate synthase, found in Prochlorococcus marinus (strain SARG / CCMP1375 / SS120).